The sequence spans 1173 residues: Alpha-mannosidase 2 (1173 aa).

The disordered stretch occupies residues 1–21 (MPFSSYIGNSRRSSTGGGTGG). Residues 1-50 (MPFSSYIGNSRRSSTGGGTGGWGQSLLPTALSKSKLAINRKPRKRTLVVN) lie on the Cytoplasmic side of the membrane. A helical; Signal-anchor membrane pass occupies residues 51–71 (FIFANFFVIALTVSLLFFLLT). Residues 72-1173 (LFHFGVPGPI…AYKLELRPHK (1102 aa)) are Lumenal-facing. Asparagine 106 carries N-linked (GlcNAc...) asparagine glycosylation. Zn(2+) contacts are provided by histidine 162 and aspartate 164. N-linked (GlcNAc...) asparagine glycosylation occurs at asparagine 262. Aspartate 276 is a Zn(2+) binding site. Residue aspartate 276 is the Nucleophile of the active site. Asparagine 467 carries N-linked (GlcNAc...) asparagine glycosylation. Histidine 564 contributes to the Zn(2+) binding site. Asparagine 675, asparagine 772, asparagine 782, asparagine 991, asparagine 1098, and asparagine 1108 each carry an N-linked (GlcNAc...) asparagine glycan.

Belongs to the glycosyl hydrolase 38 family. As to quaternary structure, homodimer; disulfide-linked. Interacts with GALT1. Zn(2+) serves as cofactor. Glycosylated.

The protein localises to the golgi apparatus membrane. The enzyme catalyses N(4)-{beta-D-GlcNAc-(1-&gt;2)-alpha-D-Man-(1-&gt;3)-[alpha-D-Man-(1-&gt;3)-[alpha-D-Man-(1-&gt;6)]-alpha-D-Man-(1-&gt;6)]-beta-D-Man-(1-&gt;4)-beta-D-GlcNAc-(1-&gt;4)-beta-D-GlcNAc}-L-asparaginyl-[protein] + 2 H2O = 2 alpha-D-mannopyranose + an N(4)-{beta-D-GlcNAc-(1-&gt;2)-alpha-D-Man-(1-&gt;3)-[alpha-D-Man-(1-&gt;6)]-beta-D-Man-(1-&gt;4)-beta-D-GlcNAc-(1-&gt;4)-beta-D-GlcNAc}-L-asparaginyl-[protein]. Its pathway is protein modification; protein glycosylation. Inhibited by 1 mM Cu(2+) and by the class II alpha-mannosidase inhibitor swainsonine. Its function is as follows. Catalyzes the first committed step in the biosynthesis of complex N-glycans. It controls conversion of high mannose to complex N-glycans; the final hydrolytic step in the N-glycan maturation pathway. Converts GlcNAcMan(5)GlcNAc(2) (Man5Gn) into GlcNAcMan(3)GlcNAc(2) (MGn) by sequential removal of two alpha1,6- and alpha1,3-linked mannose residues from the alpha1,6-mannose branch of the substrate. To a lesser extent, also able to cleave beta1,2-xylosylated Man5Gn-glycopeptide (Man5GnX-GP) and pyridylaminated substrates Man5Gn-PA and Man5GnX-PA, but not active toward Man5-glycopeptide. Required for resistance to salt stress. The polypeptide is Alpha-mannosidase 2 (Arabidopsis thaliana (Mouse-ear cress)).